We begin with the raw amino-acid sequence, 1382 residues long: Eukaryotic translation initiation factor 3 subunit A (1382 aa).

K68 is modified (N6-acetyllysine). Residues 82 to 120 (NIKSLEDVVRAYLKMAEEKTEAAKEESQQMVLDIEDLDN) adopt a coiled-coil conformation. One can recognise a PCI domain in the interval 315 to 498 (MQRMSTRVLL…RTLSFGSDLN (184 aa)). S492 and S584 each carry phosphoserine. The segment at 664–835 (LDPDFIMAKQ…REERERAERA (172 aa)) is interaction with EIF3B. 2 disordered regions span residues 810 to 844 (KEEEEQRRAEEQMLKEREERERAERAKREEELREY) and 866 to 1382 (EERE…TVRR). Composition is skewed to basic and acidic residues over residues 866–1165 (EERE…DDSR), 1177–1328 (GWRE…DPPR), and 1336–1371 (SRDRERDRDREREGEKEKASWRAEKDRESLRRTKNE). A phosphoserine mark is found at S881, S882, and S895. Repeat unit 1 spans residues 925-934 (DEDRSHRRDE). The segment at 925–1172 (DEDRSHRRDE…DSRPGPWRPL (248 aa)) is 25 X 10 AA approximate tandem repeats of [DE]-[DE]-[DE]-R-[SEVGFPILV]-[HPSN]-[RSW]-[RL]-[DRGTIHN]-[EPMANLGDT]. The 2; truncated repeat unit spans residues 935–942 (ERPRRLGD). 20 consecutive repeat copies span residues 943–952 (DEDREPSLRP), 953–962 (DDDRVPRRGM), 963–972 (DDDRGPRRGP), 973–982 (EEDRFSRRGA), 983–992 (DDDRPSWRNT), 993–1002 (DDDRPPRRIA), 1003–1012 (DEDRGNWRHA), 1013–1022 (DDDRPPRRGL), 1023–1032 (DEDRGSWRTA), 1033–1042 (DEDRGPRRGM), 1043–1052 (DDDRGPRRGG), 1054–1063 (DDERSSWRNA), 1064–1073 (DDDRGPRRGL), 1074–1083 (DDDRGPRRGM), 1084–1093 (DDDRGPRRGM), 1094–1103 (DDDRGPRRGM), 1104–1113 (DDDRGPRRGL), 1114–1123 (DDDRGPWRNA), 1124–1133 (DDDRIPRRGA), and 1134–1143 (EDDRGPWRNM). S949 carries the phosphoserine modification. Residue S1028 is modified to Phosphoserine. The 23; truncated repeat unit spans residues 1144-1152 (DDDRLSRRA). Repeat unit 24 spans residues 1153 to 1162 (DDDRFPRRGD). The stretch at 1163–1172 (DSRPGPWRPL) is one 25; approximate repeat. Phosphoserine is present on residues S1188, S1198, S1262, S1336, and S1364.

Interacts with EIF4G1. Component of the eukaryotic translation initiation factor 3 (eIF-3) complex, which is composed of 13 subunits: EIF3A, EIF3B, EIF3C, EIF3D, EIF3E, EIF3F, EIF3G, EIF3H, EIF3I, EIF3J, EIF3K, EIF3L and EIF3M. The eIF-3 complex appears to include 3 stable modules: module A is composed of EIF3A, EIF3B, EIF3G and EIF3I; module B is composed of EIF3F, EIF3H, and EIF3M; and module C is composed of EIF3C, EIF3D, EIF3E, EIF3L and EIF3K. EIF3C of module C binds EIF3B of module A and EIF3H of module B, thereby linking the three modules. EIF3J is a labile subunit that binds to the eIF-3 complex via EIF3B. The eIF-3 complex interacts with RPS6KB1 under conditions of nutrient depletion. Mitogenic stimulation leads to binding and activation of a complex composed of MTOR and RPTOR, leading to phosphorylation and release of RPS6KB1 and binding of EIF4B to eIF-3. Also interacts with KRT7 and PIWIL2. In terms of processing, phosphorylated. Phosphorylation is enhanced upon serum stimulation.

It is found in the cytoplasm. Functionally, RNA-binding component of the eukaryotic translation initiation factor 3 (eIF-3) complex, which is required for several steps in the initiation of protein synthesis. The eIF-3 complex associates with the 40S ribosome and facilitates the recruitment of eIF-1, eIF-1A, eIF-2:GTP:methionyl-tRNAi and eIF-5 to form the 43S pre-initiation complex (43S PIC). The eIF-3 complex stimulates mRNA recruitment to the 43S PIC and scanning of the mRNA for AUG recognition. The eIF-3 complex is also required for disassembly and recycling of post-termination ribosomal complexes and subsequently prevents premature joining of the 40S and 60S ribosomal subunits prior to initiation. The eIF-3 complex specifically targets and initiates translation of a subset of mRNAs involved in cell proliferation, including cell cycling, differentiation and apoptosis, and uses different modes of RNA stem-loop binding to exert either translational activation or repression. Its function is as follows. (Microbial infection) Essential for the initiation of translation on type-1 viral ribosomal entry sites (IRESs), like for HCV, PV, EV71 or BEV translation. (Microbial infection) In case of FCV infection, plays a role in the ribosomal termination-reinitiation event leading to the translation of VP2. The sequence is that of Eukaryotic translation initiation factor 3 subunit A from Homo sapiens (Human).